A 595-amino-acid polypeptide reads, in one-letter code: Aspartate--tRNA(Asp/Asn) ligase (595 aa).

L-aspartate is bound at residue Glu-175. An aspartate region spans residues 199–202; the sequence is QQYK. Arg-221 and His-454 together coordinate L-aspartate. Residue 221 to 223 participates in ATP binding; sequence RDE. Residue Glu-488 participates in ATP binding. Arg-495 serves as a coordination point for L-aspartate. 540 to 543 contacts ATP; the sequence is GIDR.

Belongs to the class-II aminoacyl-tRNA synthetase family. Type 1 subfamily. In terms of assembly, homodimer.

It localises to the cytoplasm. The catalysed reaction is tRNA(Asx) + L-aspartate + ATP = L-aspartyl-tRNA(Asx) + AMP + diphosphate. Its function is as follows. Aspartyl-tRNA synthetase with relaxed tRNA specificity since it is able to aspartylate not only its cognate tRNA(Asp) but also tRNA(Asn). Reaction proceeds in two steps: L-aspartate is first activated by ATP to form Asp-AMP and then transferred to the acceptor end of tRNA(Asp/Asn). The sequence is that of Aspartate--tRNA(Asp/Asn) ligase from Sinorhizobium medicae (strain WSM419) (Ensifer medicae).